The following is a 302-amino-acid chain: Protein NEOXANTHIN-DEFICIENT 1 (302 aa).

In terms of biological role, required for neoxanthin biosynthesis. Probably not involved directly in the enzymatic conversion of violaxanthin to neoxanthin. Is necessary but not sufficient for neoxanthin synthesis. The protein is Protein NEOXANTHIN-DEFICIENT 1 of Oryza sativa subsp. japonica (Rice).